A 591-amino-acid chain; its full sequence is V-type ATP synthase alpha chain (591 aa).

An ATP-binding site is contributed by 233–240 (GPFGAGKT).

Belongs to the ATPase alpha/beta chains family.

It carries out the reaction ATP + H2O + 4 H(+)(in) = ADP + phosphate + 5 H(+)(out). Functionally, produces ATP from ADP in the presence of a proton gradient across the membrane. The V-type alpha chain is a catalytic subunit. The sequence is that of V-type ATP synthase alpha chain from Streptococcus pneumoniae (strain ATCC 700669 / Spain 23F-1).